Reading from the N-terminus, the 424-residue chain is Glutamate-1-semialdehyde 2,1-aminomutase (424 aa).

Lysine 263 is modified (N6-(pyridoxal phosphate)lysine).

It belongs to the class-III pyridoxal-phosphate-dependent aminotransferase family. HemL subfamily. In terms of assembly, homodimer. The cofactor is pyridoxal 5'-phosphate.

Its subcellular location is the cytoplasm. The catalysed reaction is (S)-4-amino-5-oxopentanoate = 5-aminolevulinate. Its pathway is porphyrin-containing compound metabolism; protoporphyrin-IX biosynthesis; 5-aminolevulinate from L-glutamyl-tRNA(Glu): step 2/2. The sequence is that of Glutamate-1-semialdehyde 2,1-aminomutase from Campylobacter jejuni subsp. jejuni serotype O:2 (strain ATCC 700819 / NCTC 11168).